Consider the following 570-residue polypeptide: Proline--tRNA ligase (570 aa).

The protein belongs to the class-II aminoacyl-tRNA synthetase family. ProS type 1 subfamily. In terms of assembly, homodimer.

It is found in the cytoplasm. It catalyses the reaction tRNA(Pro) + L-proline + ATP = L-prolyl-tRNA(Pro) + AMP + diphosphate. Its function is as follows. Catalyzes the attachment of proline to tRNA(Pro) in a two-step reaction: proline is first activated by ATP to form Pro-AMP and then transferred to the acceptor end of tRNA(Pro). As ProRS can inadvertently accommodate and process non-cognate amino acids such as alanine and cysteine, to avoid such errors it has two additional distinct editing activities against alanine. One activity is designated as 'pretransfer' editing and involves the tRNA(Pro)-independent hydrolysis of activated Ala-AMP. The other activity is designated 'posttransfer' editing and involves deacylation of mischarged Ala-tRNA(Pro). The misacylated Cys-tRNA(Pro) is not edited by ProRS. The protein is Proline--tRNA ligase of Clostridium acetobutylicum (strain ATCC 824 / DSM 792 / JCM 1419 / IAM 19013 / LMG 5710 / NBRC 13948 / NRRL B-527 / VKM B-1787 / 2291 / W).